A 1100-amino-acid polypeptide reads, in one-letter code: Conjugal transfer protein TraA (1100 aa).

404–411 (GRAGAGKT) is an ATP binding site.

The protein belongs to the MobA/MobL family.

The chain is Conjugal transfer protein TraA (traA) from Agrobacterium fabrum (strain C58 / ATCC 33970) (Agrobacterium tumefaciens (strain C58)).